Here is a 397-residue protein sequence, read N- to C-terminus: Cysteine desulfurase IscS (397 aa).

Residues 72–73 (GS), N152, Q180, and 200–202 (SAH) each bind pyridoxal 5'-phosphate. K203 carries the N6-(pyridoxal phosphate)lysine modification. T238 serves as a coordination point for pyridoxal 5'-phosphate. The active-site Cysteine persulfide intermediate is C328. C328 is a binding site for [2Fe-2S] cluster.

The protein belongs to the class-V pyridoxal-phosphate-dependent aminotransferase family. NifS/IscS subfamily. As to quaternary structure, homodimer. Forms a heterotetramer with IscU, interacts with other sulfur acceptors. Pyridoxal 5'-phosphate serves as cofactor.

The protein resides in the cytoplasm. It catalyses the reaction (sulfur carrier)-H + L-cysteine = (sulfur carrier)-SH + L-alanine. It functions in the pathway cofactor biosynthesis; iron-sulfur cluster biosynthesis. In terms of biological role, master enzyme that delivers sulfur to a number of partners involved in Fe-S cluster assembly, tRNA modification or cofactor biosynthesis. Catalyzes the removal of elemental sulfur atoms from cysteine to produce alanine. Functions as a sulfur delivery protein for Fe-S cluster synthesis onto IscU, an Fe-S scaffold assembly protein, as well as other S acceptor proteins. In Clostridium botulinum (strain ATCC 19397 / Type A), this protein is Cysteine desulfurase IscS.